A 590-amino-acid polypeptide reads, in one-letter code: Myo-inositol transporter 3C (590 aa).

The Cytoplasmic portion of the chain corresponds to 1–63 (MSRTPSSLDK…GEDKVTPYLC (63 aa)). The helical transmembrane segment at 64–86 (FLISASAIAGFLFGYDTGVVGVA) threads the bilayer. The Extracellular portion of the chain corresponds to 87-105 (LPLVGTDLGGSVLSSSQQE). A helical membrane pass occupies residues 106–126 (IITAGTTIGAIFGSAILGGWG). Residues 127–132 (DRLGRK) are Cytoplasmic-facing. A helical membrane pass occupies residues 133-153 (VAILIADVFFTVGAVLIAASY). Residues 154–162 (SVPQMIVGR) lie on the Extracellular side of the membrane. Residues 163–183 (IVLGVGVGGAAAIAPLFITET) traverse the membrane as a helical segment. At 184–192 (APTAVRGRC) the chain is on the cytoplasmic side. The helical transmembrane segment at 193–213 (IGVNAFFIPFGQVISEAIGAG) threads the bilayer. The Extracellular segment spans residues 214 to 222 (VQDMKNGWR). Residues 223–243 (LLFALGAVPSLFQLILFHYLP) form a helical membrane-spanning segment. The Cytoplasmic segment spans residues 244–325 (ESPRILILRG…TVSLIQMAGQ (82 aa)). The chain crosses the membrane as a helical span at residues 326–346 (LSGFNTLLYYAGTLFSLLGLT). At 347-349 (NPA) the chain is on the extracellular side. Residues 350–370 (LGGLIPAGTNAFFVLVGMTLV) traverse the membrane as a helical segment. Topologically, residues 371-376 (DKVGRR) are cytoplasmic. The helical transmembrane segment at 377 to 397 (GLLMFGVPIMLAGLVWNIVAF) threads the bilayer. Residues 398–417 (HYLCIPTGGLLDTSYKYDTK) are Extracellular-facing. The chain crosses the membrane as a helical span at residues 418-438 (LVGIVIGGIVFFTTGFGLTYS). Residues 439–454 (HLAWYQSEFLALEVRS) are Cytoplasmic-facing. The helical transmembrane segment at 455-475 (VGSGIATTANWVANLVVSVSY) threads the bilayer. At 476–485 (LTELETLTPS) the chain is on the extracellular side. The chain crosses the membrane as a helical span at residues 486–506 (GTYGLYLGFSVVFFIFAVFCY). Over 507–590 (PETKQLSIDE…NGAKRFPISR (84 aa)) the chain is Cytoplasmic.

It belongs to the major facilitator superfamily. Sugar transporter (TC 2.A.1.1) family.

Its subcellular location is the cell membrane. The enzyme catalyses myo-inositol(out) + H(+)(out) = myo-inositol(in) + H(+)(in). Major transporter for myo-inositol. Plays a role in the traversal of the host blood-brain barrier. This is Myo-inositol transporter 3C from Cryptococcus neoformans var. grubii serotype A (strain H99 / ATCC 208821 / CBS 10515 / FGSC 9487) (Filobasidiella neoformans var. grubii).